The primary structure comprises 230 residues: Cytidylate kinase (230 aa).

12–20 (GPSGAGKGT) is an ATP binding site.

It belongs to the cytidylate kinase family. Type 1 subfamily.

It localises to the cytoplasm. The catalysed reaction is CMP + ATP = CDP + ADP. The enzyme catalyses dCMP + ATP = dCDP + ADP. The sequence is that of Cytidylate kinase from Yersinia enterocolitica serotype O:8 / biotype 1B (strain NCTC 13174 / 8081).